A 629-amino-acid chain; its full sequence is tRNA uridine 5-carboxymethylaminomethyl modification enzyme MnmG (629 aa).

Residues 15–20 (GAGHAG), V127, and S182 each bind FAD. The interval 203 to 227 (TPPRVKSSTIDYSKTEEQPGDDHPR) is disordered. Residues 215-227 (SKTEEQPGDDHPR) show a composition bias toward basic and acidic residues. An NAD(+)-binding site is contributed by 274 to 288 (GARYCPSIEDKIVRF). Q371 contacts FAD.

This sequence belongs to the MnmG family. In terms of assembly, homodimer. Heterotetramer of two MnmE and two MnmG subunits. The cofactor is FAD.

The protein localises to the cytoplasm. In terms of biological role, NAD-binding protein involved in the addition of a carboxymethylaminomethyl (cmnm) group at the wobble position (U34) of certain tRNAs, forming tRNA-cmnm(5)s(2)U34. The chain is tRNA uridine 5-carboxymethylaminomethyl modification enzyme MnmG from Listeria welshimeri serovar 6b (strain ATCC 35897 / DSM 20650 / CCUG 15529 / CIP 8149 / NCTC 11857 / SLCC 5334 / V8).